The chain runs to 255 residues: High-affinity branched-chain amino acid transport ATP-binding protein BraF (255 aa).

The region spanning 6–254 (LEVSGLTMRF…PDVIKAYLGE (249 aa)) is the ABC transporter domain. 38 to 45 (GPNGAGKT) is an ATP binding site.

It belongs to the ABC transporter superfamily.

The protein localises to the cell inner membrane. Functionally, component of the high affinity leucine, isoleucine, valine, transport system (LIV-I), which is operative without Na(+) and is specific for alanine and threonine, in addition to branched-chain amino acids. This is High-affinity branched-chain amino acid transport ATP-binding protein BraF (braF) from Pseudomonas aeruginosa (strain ATCC 15692 / DSM 22644 / CIP 104116 / JCM 14847 / LMG 12228 / 1C / PRS 101 / PAO1).